The primary structure comprises 418 residues: Adenylosuccinate synthetase (418 aa).

GTP contacts are provided by residues Gly-12–Lys-18 and Gly-40–Thr-42. Catalysis depends on Asp-13, which acts as the Proton acceptor. Mg(2+)-binding residues include Asp-13 and Gly-40. Residues Asp-13–Lys-16, Asn-38–His-41, Thr-128, Arg-142, Gln-221, Thr-236, and Arg-299 each bind IMP. Catalysis depends on His-41, which acts as the Proton donor. Position 295–301 (Ala-295–Arg-301) interacts with substrate. GTP is bound by residues Arg-301, Lys-327–Asp-329, and Ser-399–Gly-401.

This sequence belongs to the adenylosuccinate synthetase family. In terms of assembly, homodimer. Mg(2+) is required as a cofactor.

It localises to the cytoplasm. The enzyme catalyses IMP + L-aspartate + GTP = N(6)-(1,2-dicarboxyethyl)-AMP + GDP + phosphate + 2 H(+). Its pathway is purine metabolism; AMP biosynthesis via de novo pathway; AMP from IMP: step 1/2. In terms of biological role, plays an important role in the de novo pathway of purine nucleotide biosynthesis. Catalyzes the first committed step in the biosynthesis of AMP from IMP. The polypeptide is Adenylosuccinate synthetase (Finegoldia magna (strain ATCC 29328 / DSM 20472 / WAL 2508) (Peptostreptococcus magnus)).